The following is a 480-amino-acid chain: Beta-glucosidase A (480 aa).

Residue glutamate 177 is the Proton donor of the active site. Glutamate 378 (nucleophile) is an active-site residue.

This sequence belongs to the glycosyl hydrolase 1 family.

It catalyses the reaction Hydrolysis of terminal, non-reducing beta-D-glucosyl residues with release of beta-D-glucose.. The polypeptide is Beta-glucosidase A (bglA) (Enterobacter agglomerans (Erwinia herbicola)).